Reading from the N-terminus, the 149-residue chain is Transcription antitermination protein NusB (149 aa).

This sequence belongs to the NusB family.

Involved in transcription antitermination. Required for transcription of ribosomal RNA (rRNA) genes. Binds specifically to the boxA antiterminator sequence of the ribosomal RNA (rrn) operons. This chain is Transcription antitermination protein NusB, found in Hahella chejuensis (strain KCTC 2396).